Reading from the N-terminus, the 227-residue chain is Ribonuclease S-5 (227 aa).

A signal peptide spans 1–27 (MGITGMVYVVTMVFLLIVLILSSSTVG). RNA is bound at residue Gln36. The cysteines at positions 42 and 49 are disulfide-linked. Asn45 carries an N-linked (GlcNAc...) asparagine glycan. Residues His60, 97–98 (NV), Phe107, 110–111 (KE), and 114–115 (KH) each bind RNA. Catalysis depends on His60, which acts as the Proton donor. Residues Cys75 and Cys118 are joined by a disulfide bond. Residue Glu111 is part of the active site. His115 functions as the Proton acceptor in the catalytic mechanism. N-linked (GlcNAc...) asparagine glycosylation occurs at Asn143. Cystine bridges form between Cys182–Cys220 and Cys197–Cys208.

The protein belongs to the RNase T2 family. In terms of processing, N-glycan at Asn-45 consists of disaccharide (GlcNAc-GlcNAc). N-linked core structure at Asn-143 contains xylose.

It catalyses the reaction a ribonucleotidyl-ribonucleotide-RNA + H2O = a 3'-end 3'-phospho-ribonucleotide-RNA + a 5'-end dephospho-ribonucleoside-RNA + H(+). Self-incompatibility (SI) is the inherited ability of a flowering plant to prevent self-fertilization by discriminating between self and non-self pollen during pollination. In many species, self-incompatibility is controlled by the single, multiallelic locus S. In Pyrus pyrifolia (Chinese pear), this protein is Ribonuclease S-5.